The following is a 242-amino-acid chain: MGHKIHPTGLRLGITQEHRSRWYATSKMYPILLQEDDRIRRFIHKKYGAAGISDVLIARKADQLEVELKTARPGVLVGRQGSGIEELRTGIQKTIGDHSRQVRINVVEVERVDADAFLLAEYIAQQLEKRVAFRRTIRMAVQRAQRAGVLGLKIQVGGRLNGAEIARTEWTREGRVPLHTLRAEIDYATKVASTTYGVLGIKVWIFKGEVLGDEAQTMPVGASPRRRGNRRPQQFEDRSNEG.

Residues 39 to 110 (IRRFIHKKYG…QVRINVVEVE (72 aa)) form the KH type-2 domain. Residues 217–242 (TMPVGASPRRRGNRRPQQFEDRSNEG) are disordered. Basic and acidic residues predominate over residues 233 to 242 (QQFEDRSNEG).

Belongs to the universal ribosomal protein uS3 family. As to quaternary structure, part of the 30S ribosomal subunit. Forms a tight complex with proteins S10 and S14.

Its function is as follows. Binds the lower part of the 30S subunit head. Binds mRNA in the 70S ribosome, positioning it for translation. This chain is Small ribosomal subunit protein uS3, found in Prochlorococcus marinus (strain MIT 9313).